The primary structure comprises 500 residues: Pyridine nucleotide-disulfide oxidoreductase domain-containing protein 1 (500 aa).

Met1 is modified (N-acetylmethionine). Residues 211-235 (TRYTTEGRKKEARSKSKADNVGSAL) are disordered. A compositionally biased stretch (basic and acidic residues) spans 213 to 228 (YTTEGRKKEARSKSKA).

The protein belongs to the class-I pyridine nucleotide-disulfide oxidoreductase family. PYROXD1 subfamily. FAD serves as cofactor.

The protein localises to the nucleus. It is found in the cytoplasm. Its subcellular location is the myofibril. It localises to the sarcomere. Probable FAD-dependent oxidoreductase; involved in the cellular oxidative stress response. Required for normal sarcomere structure and muscle fiber integrity. This Homo sapiens (Human) protein is Pyridine nucleotide-disulfide oxidoreductase domain-containing protein 1 (PYROXD1).